The sequence spans 281 residues: Probable superoxide dismutase [Fe] (281 aa).

Fe cation contacts are provided by H104, H152, D236, and H240.

It belongs to the iron/manganese superoxide dismutase family. It depends on Fe cation as a cofactor.

The catalysed reaction is 2 superoxide + 2 H(+) = H2O2 + O2. Destroys superoxide anion radicals which are normally produced within the cells and which are toxic to biological systems. The sequence is that of Probable superoxide dismutase [Fe] (sodF) from Bacillus subtilis (strain 168).